The primary structure comprises 342 residues: L-threonine 3-dehydrogenase (342 aa).

Cysteine 38 contributes to the Zn(2+) binding site. Active-site charge relay system residues include threonine 40 and histidine 43. Residues histidine 63, glutamate 64, cysteine 93, cysteine 96, cysteine 99, and cysteine 107 each coordinate Zn(2+). NAD(+)-binding positions include isoleucine 175, aspartate 195, arginine 200, 262-264 (LGI), and 286-287 (IY).

Belongs to the zinc-containing alcohol dehydrogenase family. In terms of assembly, homotetramer. The cofactor is Zn(2+).

It is found in the cytoplasm. It carries out the reaction L-threonine + NAD(+) = (2S)-2-amino-3-oxobutanoate + NADH + H(+). It participates in amino-acid degradation; L-threonine degradation via oxydo-reductase pathway; glycine from L-threonine: step 1/2. In terms of biological role, catalyzes the NAD(+)-dependent oxidation of L-threonine to 2-amino-3-ketobutyrate. This is L-threonine 3-dehydrogenase from Aeromonas salmonicida (strain A449).